Consider the following 433-residue polypeptide: Zuotin (433 aa).

S50 bears the Phosphoserine mark. Positions 98–170 constitute a J domain; that stretch reads LYAAMGLSKL…RAQYDSCDFV (73 aa). Residues 292–330 show a composition bias toward basic and acidic residues; sequence EEKKEKERRKWEREAGARAEAEAKAKAEAEAKAKAESEA. Positions 292 to 357 are disordered; the sequence is EEKKEKERRK…KAAKKKNKRA (66 aa).

In terms of assembly, RAC is a heterodimer of the Hsp70/DnaK-type chaperone SSZ1 and the Hsp40/DnaJ-type chaperone ZUO1. RAC associates with ribosomes via ZUO1.

The protein localises to the cytoplasm. Its function is as follows. Component of the ribosome-associated complex (RAC), a heterodimeric chaperone complex involved in regulation of accurate translation termination and in folding or maintaining nascent polypeptides in a folding-competent state. RAC stimulates the ATPase activity of the ribosome-associated pool of Hsp70-type chaperones SSB1/SSB2 that bind to the nascent polypeptide chain. ZUO1 can act as a J-protein for SSB1/SSB2 only when associated with SSZ1. The chain is Zuotin (ZUO1) from Saccharomyces cerevisiae (strain ATCC 204508 / S288c) (Baker's yeast).